We begin with the raw amino-acid sequence, 166 residues long: NAD(P)H-quinone oxidoreductase subunit I, chloroplastic (166 aa).

2 4Fe-4S ferredoxin-type domains span residues 55-84 and 95-124; these read GRIH…VDWK and LNYS…MTEE. [4Fe-4S] cluster is bound by residues Cys64, Cys67, Cys70, Cys74, Cys104, Cys107, Cys110, and Cys114.

Belongs to the complex I 23 kDa subunit family. As to quaternary structure, NDH is composed of at least 16 different subunits, 5 of which are encoded in the nucleus. [4Fe-4S] cluster is required as a cofactor.

It localises to the plastid. It is found in the chloroplast thylakoid membrane. The catalysed reaction is a plastoquinone + NADH + (n+1) H(+)(in) = a plastoquinol + NAD(+) + n H(+)(out). It carries out the reaction a plastoquinone + NADPH + (n+1) H(+)(in) = a plastoquinol + NADP(+) + n H(+)(out). Its function is as follows. NDH shuttles electrons from NAD(P)H:plastoquinone, via FMN and iron-sulfur (Fe-S) centers, to quinones in the photosynthetic chain and possibly in a chloroplast respiratory chain. The immediate electron acceptor for the enzyme in this species is believed to be plastoquinone. Couples the redox reaction to proton translocation, and thus conserves the redox energy in a proton gradient. This is NAD(P)H-quinone oxidoreductase subunit I, chloroplastic from Oteiza scandens (Climbing oteiza).